The chain runs to 690 residues: Glycine--tRNA ligase beta subunit (690 aa).

This sequence belongs to the class-II aminoacyl-tRNA synthetase family. Tetramer of two alpha and two beta subunits.

Its subcellular location is the cytoplasm. The enzyme catalyses tRNA(Gly) + glycine + ATP = glycyl-tRNA(Gly) + AMP + diphosphate. The chain is Glycine--tRNA ligase beta subunit from Desulfitobacterium hafniense (strain Y51).